Reading from the N-terminus, the 96-residue chain is Protein Vpr (96 aa).

The segment at 1–42 (MEQAPEDQGPQREPYNEWTLDLLEELKNEAVRHFPRPWLHSL) is homooligomerization. Residues Ser-79, Ser-94, and Ser-96 each carry the phosphoserine; by host modification.

The protein belongs to the HIV-1 VPR protein family. As to quaternary structure, homooligomer, may form homodimer. Interacts with p6-gag region of the Pr55 Gag precursor protein through a (Leu-X-X)4 motif near the C-terminus of the P6gag protein. Interacts with host UNG. May interact with host RAD23A/HHR23A. Interacts with host VPRBP/DCAF1, leading to hijack the CUL4A-RBX1-DDB1-DCAF1/VPRBP complex, mediating ubiquitination of host proteins such as TERT and ZGPAT and arrest of the cell cycle in G2 phase. Post-translationally, phosphorylated on several residues by host. These phosphorylations regulate VPR activity for the nuclear import of the HIV-1 pre-integration complex.

The protein resides in the virion. It localises to the host nucleus. The protein localises to the host extracellular space. In terms of biological role, during virus replication, may deplete host UNG protein, and incude G2-M cell cycle arrest. Acts by targeting specific host proteins for degradation by the 26S proteasome, through association with the cellular CUL4A-DDB1 E3 ligase complex by direct interaction with host VPRPB/DCAF-1. Cell cycle arrest reportedly occurs within hours of infection and is not blocked by antiviral agents, suggesting that it is initiated by the VPR carried into the virion. Additionally, VPR induces apoptosis in a cell cycle dependent manner suggesting that these two effects are mechanistically linked. Detected in the serum and cerebrospinal fluid of AIDS patient, VPR may also induce cell death to bystander cells. During virus entry, plays a role in the transport of the viral pre-integration (PIC) complex to the host nucleus. This function is crucial for viral infection of non-dividing macrophages. May act directly at the nuclear pore complex, by binding nucleoporins phenylalanine-glycine (FG)-repeat regions. This is Protein Vpr from Human immunodeficiency virus type 1 group M subtype F1 (isolate 93BR020) (HIV-1).